A 317-amino-acid polypeptide reads, in one-letter code: L-lactate dehydrogenase (317 aa).

Val-16, Asp-37, and Tyr-69 together coordinate NAD(+). Residues Gln-86, Arg-92, and 124 to 127 each bind substrate; that span reads NPVD. NAD(+) is bound by residues 122–124 and Ser-147; that span reads ASN. 152 to 155 contacts substrate; it reads DSAR. The active-site Proton acceptor is His-179. Position 223 is a phosphotyrosine (Tyr-223). Thr-232 contacts substrate.

This sequence belongs to the LDH/MDH superfamily. LDH family. In terms of assembly, homotetramer.

It localises to the cytoplasm. The catalysed reaction is (S)-lactate + NAD(+) = pyruvate + NADH + H(+). The protein operates within fermentation; pyruvate fermentation to lactate; (S)-lactate from pyruvate: step 1/1. Catalyzes the conversion of lactate to pyruvate. The polypeptide is L-lactate dehydrogenase (Mycoplasma capricolum subsp. capricolum (strain California kid / ATCC 27343 / NCTC 10154)).